The chain runs to 156 residues: Ribosomal RNA large subunit methyltransferase H (156 aa).

Residues Leu73, Gly104, and Ile123–Leu128 contribute to the S-adenosyl-L-methionine site.

This sequence belongs to the RNA methyltransferase RlmH family. In terms of assembly, homodimer.

The protein resides in the cytoplasm. The enzyme catalyses pseudouridine(1915) in 23S rRNA + S-adenosyl-L-methionine = N(3)-methylpseudouridine(1915) in 23S rRNA + S-adenosyl-L-homocysteine + H(+). Functionally, specifically methylates the pseudouridine at position 1915 (m3Psi1915) in 23S rRNA. This Xanthomonas axonopodis pv. citri (strain 306) protein is Ribosomal RNA large subunit methyltransferase H.